A 67-amino-acid polypeptide reads, in one-letter code: Protein AaeX (67 aa).

2 consecutive transmembrane segments (helical) span residues 3-23 and 43-63; these read VLPV…EIIV and LVWH…YVVS.

The protein belongs to the AaeX family.

It localises to the cell membrane. The chain is Protein AaeX from Erwinia tasmaniensis (strain DSM 17950 / CFBP 7177 / CIP 109463 / NCPPB 4357 / Et1/99).